A 36-amino-acid polypeptide reads, in one-letter code: Adenylate kinase (36 aa).

Position 10 to 15 (10 to 15 (GAGKGT)) interacts with ATP. Residues 30 to 36 (ATGDLFR) form an NMP region. AMP-binding residues include T31 and R36.

It belongs to the adenylate kinase family. As to quaternary structure, monomer.

It localises to the cytoplasm. It catalyses the reaction AMP + ATP = 2 ADP. It functions in the pathway purine metabolism; AMP biosynthesis via salvage pathway; AMP from ADP: step 1/1. Catalyzes the reversible transfer of the terminal phosphate group between ATP and AMP. Plays an important role in cellular energy homeostasis and in adenine nucleotide metabolism. The protein is Adenylate kinase (adk) of Streptomyces griseus.